The following is a 369-amino-acid chain: Ferredoxin--NADP reductase, chloroplastic (369 aa).

The transit peptide at 1–55 directs the protein to the chloroplast; it reads MTTAVTAAVSFPSTKTTSLSARSSSVISPDKISYKKVPLYYRNVSATGKMGPIRA. The FAD-binding FR-type domain maps to 90-212; that stretch reads KTPYVGRCLL…TGPVGKEMLM (123 aa). Residues 148–151, 169–171, tyrosine 175, 186–188, and threonine 227 contribute to the FAD site; these read RLYS, CVK, and VCS. Positions 151 and 171 each coordinate NADP(+). NADP(+) is bound by residues threonine 227, 259 to 260, 289 to 290, 299 to 301, 328 to 329, and glutamate 367; these read VP, SR, KMY, and GL.

It belongs to the ferredoxin--NADP reductase type 1 family. It depends on FAD as a cofactor.

It localises to the plastid. The protein resides in the chloroplast stroma. The protein localises to the chloroplast thylakoid membrane. The catalysed reaction is 2 reduced [2Fe-2S]-[ferredoxin] + NADP(+) + H(+) = 2 oxidized [2Fe-2S]-[ferredoxin] + NADPH. It participates in energy metabolism; photosynthesis. In terms of biological role, may play a key role in regulating the relative amounts of cyclic and non-cyclic electron flow to meet the demands of the plant for ATP and reducing power. This Spinacia oleracea (Spinach) protein is Ferredoxin--NADP reductase, chloroplastic (PETH).